The primary structure comprises 190 residues: Succinate dehydrogenase assembly factor 2, mitochondrial (190 aa).

The protein belongs to the SDHAF2 family. As to quaternary structure, interacts with the flavoprotein subunit within the SDH catalytic dimer.

It is found in the mitochondrion matrix. Functionally, plays an essential role in the assembly of succinate dehydrogenase (SDH), an enzyme complex (also referred to as respiratory complex II) that is a component of both the tricarboxylic acid (TCA) cycle and the mitochondrial electron transport chain, and which couples the oxidation of succinate to fumarate with the reduction of ubiquinone (coenzyme Q) to ubiquinol. Required for flavinylation (covalent attachment of FAD) of the flavoprotein subunit of the SDH catalytic dimer. This is Succinate dehydrogenase assembly factor 2, mitochondrial from Komagataella phaffii (strain GS115 / ATCC 20864) (Yeast).